The chain runs to 434 residues: Probable transcription factor HMS1 (434 aa).

Positions threonine 266 to leucine 341 constitute a bHLH domain. The segment at histidine 365 to phenylalanine 434 is disordered. Composition is skewed to polar residues over residues glutamate 368–valine 382 and proline 402–serine 423.

Interacts with the G1/S-specific cyclin PCL1. Post-translationally, phosphorylated by the cyclin-CDK complex PCL1-PHO85.

Its subcellular location is the nucleus. In terms of biological role, involved in exit from mitosis and pseudohyphal differentiation. The chain is Probable transcription factor HMS1 (HMS1) from Saccharomyces cerevisiae (strain ATCC 204508 / S288c) (Baker's yeast).